Here is a 179-residue protein sequence, read N- to C-terminus: Adenine phosphoribosyltransferase (179 aa).

Belongs to the purine/pyrimidine phosphoribosyltransferase family. As to quaternary structure, homodimer.

The protein localises to the cytoplasm. The enzyme catalyses AMP + diphosphate = 5-phospho-alpha-D-ribose 1-diphosphate + adenine. It participates in purine metabolism; AMP biosynthesis via salvage pathway; AMP from adenine: step 1/1. Functionally, catalyzes a salvage reaction resulting in the formation of AMP, that is energically less costly than de novo synthesis. The protein is Adenine phosphoribosyltransferase of Gluconobacter oxydans (strain 621H) (Gluconobacter suboxydans).